Reading from the N-terminus, the 44-residue chain is Large ribosomal subunit protein bL34 (44 aa).

The protein belongs to the bacterial ribosomal protein bL34 family.

This is Large ribosomal subunit protein bL34 from Wolbachia sp. subsp. Brugia malayi (strain TRS).